Consider the following 181-residue polypeptide: Shikimate kinase (181 aa).

Residue 17 to 22 (GAGKTT) participates in ATP binding. Position 21 (Thr21) interacts with Mg(2+). The substrate site is built by Asp39, Arg63, and Gly85. Arg122 is an ATP binding site. Arg141 is a binding site for substrate.

The protein belongs to the shikimate kinase family. In terms of assembly, monomer. It depends on Mg(2+) as a cofactor.

The protein localises to the cytoplasm. The enzyme catalyses shikimate + ATP = 3-phosphoshikimate + ADP + H(+). The protein operates within metabolic intermediate biosynthesis; chorismate biosynthesis; chorismate from D-erythrose 4-phosphate and phosphoenolpyruvate: step 5/7. In terms of biological role, catalyzes the specific phosphorylation of the 3-hydroxyl group of shikimic acid using ATP as a cosubstrate. In Trichormus variabilis (strain ATCC 29413 / PCC 7937) (Anabaena variabilis), this protein is Shikimate kinase.